Here is a 249-residue protein sequence, read N- to C-terminus: Ribonuclease PH (249 aa).

Residues R90 and 128 to 130 each bind phosphate; that span reads GTR.

Belongs to the RNase PH family. As to quaternary structure, homohexameric ring arranged as a trimer of dimers.

The enzyme catalyses tRNA(n+1) + phosphate = tRNA(n) + a ribonucleoside 5'-diphosphate. Phosphorolytic 3'-5' exoribonuclease that plays an important role in tRNA 3'-end maturation. Removes nucleotide residues following the 3'-CCA terminus of tRNAs; can also add nucleotides to the ends of RNA molecules by using nucleoside diphosphates as substrates, but this may not be physiologically important. Probably plays a role in initiation of 16S rRNA degradation (leading to ribosome degradation) during starvation. The polypeptide is Ribonuclease PH (Parasynechococcus marenigrum (strain WH8102)).